The sequence spans 452 residues: Probable ECA polymerase (452 aa).

11 consecutive transmembrane segments (helical) span residues 6-26, 37-57, 63-83, 118-138, 155-175, 181-201, 207-227, 228-248, 341-361, 378-398, and 410-430; these read FSGL…LTWF, VFFS…TSVL, VGVA…CFYG, VILM…NGFL, GVAL…VYFL, AWLF…MIVG, IIIA…ISLW, MLVA…LKRY, LVVM…GLII, YKAA…IVLA, and VFFL…FWLF.

This sequence belongs to the WzyE family. In terms of assembly, probably part of a complex composed of WzxE, WzyE and WzzE.

The protein resides in the cell inner membrane. The protein operates within bacterial outer membrane biogenesis; enterobacterial common antigen biosynthesis. Functionally, probably involved in the polymerization of enterobacterial common antigen (ECA) trisaccharide repeat units. This chain is Probable ECA polymerase, found in Salmonella agona (strain SL483).